The primary structure comprises 814 residues: Syn-copalyl diphosphate synthase TPS3, chloroplastic (814 aa).

A chloroplast-targeting transit peptide spans M1–R52. K248 provides a ligand contact to substrate. Residues D386 and D388 each contribute to the Mg(2+) site. The DXDD motif motif lies at D386 to D389. Position 472 (K472) interacts with substrate.

This sequence belongs to the terpene synthase family. Mg(2+) serves as cofactor. In terms of tissue distribution, mostly expressed in trichomes of leaves and fruits.

The protein localises to the plastid. Its subcellular location is the chloroplast. It carries out the reaction (2E,6E,10E)-geranylgeranyl diphosphate = 9alpha-copalyl diphosphate. Its pathway is secondary metabolite biosynthesis; terpenoid biosynthesis. Functionally, involved in the biosynthesis of labdane-type diterpenoid including cleroda-dienols, and peregrinol lactones and furan derivatives, dopaminergic diterpenoids that can bind to dopamine receptors in the human pituitary gland, have probably ability to lower prolactin levels, and are used to treat menstrual cycle disorders (e.g. premenstrual syndrome and mastodynia). Terpene synthase that produces syn-copalyl diphosophate from geranylgeranyl diphosphate (GGPP). In Vitex agnus-castus (Chaste tree), this protein is Syn-copalyl diphosphate synthase TPS3, chloroplastic.